A 153-amino-acid chain; its full sequence is Probable disulfide formation protein (153 aa).

A helical membrane pass occupies residues D4–Y23. Residues C33 and C36 are joined by a disulfide bond. A run of 2 helical transmembrane segments spans residues A38–G57 and Y64–L81. A disulfide bridge links C93 with C101. A helical transmembrane segment spans residues R117–P139.

This sequence belongs to the DsbB family. BdbC subfamily.

The protein localises to the cell membrane. Required for disulfide bond formation in some proteins. The protein is Probable disulfide formation protein of Deinococcus radiodurans (strain ATCC 13939 / DSM 20539 / JCM 16871 / CCUG 27074 / LMG 4051 / NBRC 15346 / NCIMB 9279 / VKM B-1422 / R1).